We begin with the raw amino-acid sequence, 335 residues long: Twinfilin (335 aa).

ADF-H domains follow at residues 4 to 140 (SSGI…QHKL) and 176 to 316 (GISF…NELH). The interval 307–335 (SEESIINELHPPKVEEKKAFSKPSRPGRK) is disordered. A compositionally biased stretch (basic and acidic residues) spans 316–325 (HPPKVEEKKA).

The protein belongs to the actin-binding proteins ADF family. Twinfilin subfamily. In terms of assembly, interacts with G-actin; ADP-actin form.

It is found in the cytoplasm. The protein localises to the cytoskeleton. It localises to the cell cortex. Functionally, actin-binding protein involved in motile and morphological processes. Inhibits actin polymerization, likely by sequestering G-actin. The chain is Twinfilin (twfA) from Dictyostelium discoideum (Social amoeba).